A 619-amino-acid polypeptide reads, in one-letter code: Long-chain fatty acid transport protein 6 (619 aa).

Helical transmembrane passes span 22 to 42 (LLFPYFWDDFWFVLKVVLIII) and 119 to 139 (VHVWFGLAKLGCVVAFLNTNI). Residue 221 to 232 (YIFTSGTTGLPK) coordinates AMP.

This sequence belongs to the ATP-dependent AMP-binding enzyme family. Strongly expressed in heart and localizes to cardiac myocytes. Expressed at moderate levels in placenta, testis, and adrenal glands. Expressed at very low levels in kidney, bladder and uterus.

It localises to the cell membrane. Its subcellular location is the sarcolemma. It carries out the reaction a fatty acid(in) = a fatty acid(out). The enzyme catalyses hexadecanoate(out) = hexadecanoate(in). The catalysed reaction is (9Z)-octadecenoate(out) = (9Z)-octadecenoate(in). It catalyses the reaction (9Z,12Z)-octadecadienoate(out) = (9Z,12Z)-octadecadienoate(in). It carries out the reaction a very long-chain fatty acid + ATP + CoA = a very long-chain fatty acyl-CoA + AMP + diphosphate. The enzyme catalyses tetracosanoate + ATP + CoA = tetracosanoyl-CoA + AMP + diphosphate. The catalysed reaction is a long-chain fatty acid + ATP + CoA = a long-chain fatty acyl-CoA + AMP + diphosphate. It catalyses the reaction (5Z,8Z,11Z,14Z)-eicosatetraenoate + ATP + CoA = (5Z,8Z,11Z,14Z)-eicosatetraenoyl-CoA + AMP + diphosphate. It carries out the reaction (9Z)-octadecenoate + ATP + CoA = (9Z)-octadecenoyl-CoA + AMP + diphosphate. Mediates the import of long-chain fatty acids (LCFA) into the cell by facilitating their transport at the plasma membrane. Also functions as an acyl-CoA ligase catalyzing the ATP-dependent formation of fatty acyl-CoA using LCFA and very-long-chain fatty acids (VLCFA) as substrates. Plays a pivotal role in regulating available LCFA substrates from exogenous sources in tissues undergoing high levels of beta-oxidation such as the heart. This Homo sapiens (Human) protein is Long-chain fatty acid transport protein 6 (SLC27A6).